The chain runs to 981 residues: MEFHLQKKATKTNATTISIEITKPVKNIKLEPGQFIEDIKLIYTHTNTIRKIGTTNYTIVTDNSNIDNFKGIENSSDDDDDDDDDDDYNNNNNNNNNNNNNNNNNNNNNNNNINSNKNINSNNSINNSLSNNSSNINNSSNNISYIGNSSNSINNNDNKLSRSRSRSRGSAKTTSSLTSSKRSLDSRNRNRDRSYTRSRSRSRSRSYSRGFSSLSRSRSRSRSISSRSRSRSRSRRSRSRSSRSRSRSRSKSKSKSRRSRSRSRSRRSRSRSDSRSRSDSRGRSRSRSDSRKNSKRQTKSRSRSESRLPDKNYSSKRHQNSRKRNRSYSRSRTRSWSRSRTRSRSRRRYGGRTFRSPRRSRDDSRDRGRDRERDRDRNRCRDRDRDRERERERRLRDRNRDRERDGYRERDRGRYRERGGERERNRNRDRDRERDRNRDRDRSQSPHNEKNKGFLSSSGNKIETKLKSPISNITKYSDMDIDNNINNIINSNNINNNNIKNSNNINNSNNNNNNNNNNNNNNNNNNNNNNNNNNNNNNNNNNNSHNNTNGNVNGVSKTTSSPASDNSTPENISTDLDSPLLKKNQQLNLIKEQTNKLKTEDSIDESNNNGNDRFKTKCSSTENENKNRENEKNNSENSKNNPNNNNPNNNNNNNNNNNNNNNNNNNNNNNNNNNNNNNNNNNNNNNNNNNNNNNNNNNSNNNNNPNNYNNNNPNNNPNNNNNNNNKNINKNNSNNSNNSNNSSNSRNNSNNSNNNNNNNNLNNNNPNNNNPNNNNPNNNNPNNNNPNNNNNNNNNNNNNNNNNNNNNNNNNKNNNNNNNSFSEEEEEEGSLNQVRNISPKIGKYNEDISFLEKEWNRLGNVQNDTNSSPISQQLSTSSSPFKSTGGSNDGNSSDIIMMESNNDIINDGGKKNRVFKESQVVQRESLDVSKFKKSKAIFFGEGWIYRNHRKEPCVSWRFNNNTPPPDPRLNRDYINLRYVYE.

Disordered stretches follow at residues 65 to 133 (NIDN…SNNS), 149 to 463 (SSNS…NKIE), 491 to 580 (SNNI…DSPL), 592 to 834 (EQTN…LNQV), and 861 to 891 (VQND…NDGN). Residues 75 to 88 (SSDDDDDDDDDDDY) are compositionally biased toward acidic residues. Composition is skewed to low complexity over residues 89 to 133 (NNNN…SNNS), 149 to 158 (SSNSINNNDN), and 170 to 181 (SAKTTSSLTSSK). Residues 182–195 (RSLDSRNRNRDRSY) are compositionally biased toward basic and acidic residues. The span at 196 to 206 (TRSRSRSRSRS) shows a compositional bias: basic residues. Over residues 207-227 (YSRGFSSLSRSRSRSRSISSR) the composition is skewed to low complexity. The span at 228–269 (SRSRSRSRRSRSRSSRSRSRSRSKSKSKSRRSRSRSRSRRSR) shows a compositional bias: basic residues. The segment covering 270 to 292 (SRSDSRSRSDSRGRSRSRSDSRK) has biased composition (basic and acidic residues). Residues 314–358 (SSKRHQNSRKRNRSYSRSRTRSWSRSRTRSRSRRRYGGRTFRSPR) show a composition bias toward basic residues. The segment covering 359–452 (RSRDDSRDRG…SQSPHNEKNK (94 aa)) has biased composition (basic and acidic residues). Over residues 491–553 (SNNINNNNIK…SHNNTNGNVN (63 aa)) the composition is skewed to low complexity. 2 stretches are compositionally biased toward polar residues: residues 554–576 (GVSK…STDL) and 605–622 (ESNN…SSTE). Residues 623-634 (NENKNRENEKNN) show a composition bias toward basic and acidic residues. 2 stretches are compositionally biased toward low complexity: residues 635–820 (SENS…NNNS) and 867–891 (SSPI…NDGN).

This is an uncharacterized protein from Dictyostelium discoideum (Social amoeba).